Reading from the N-terminus, the 397-residue chain is Golgi-associated RAB2 interactor protein 2 (397 aa).

Disordered stretches follow at residues 1 to 24 (MKKSNRKSPTRIDEKDDICVPDSK) and 342 to 397 (QTTL…KLLN). Composition is skewed to basic and acidic residues over residues 10-24 (TRIDEKDDICVPDSK), 353-369 (EKSKEMSDRPREIRTMD), and 376-397 (KAEEPRSRRTDSDTSDKCKLLN).

The protein belongs to the GARIN family. Interacts with CALM1.

The protein resides in the cell projection. It is found in the cilium. It localises to the flagellum. Functionally, seems to play a role in sperm motility. The protein is Golgi-associated RAB2 interactor protein 2 (GARIN2) of Bos taurus (Bovine).